The primary structure comprises 127 residues: Mitochondrial pyruvate carrier 2 (127 aa).

The Mitochondrial matrix portion of the chain corresponds to 2–40 (SAAGARGLRATYHRLLDKVELMLPEKLRPLYNHPAGPRT). A helical membrane pass occupies residues 41 to 61 (VFFWAPIMKRGLVCAGLADMA). Over 62–72 (RPAEKLSTAQS) the chain is Mitochondrial intermembrane. Residues 73 to 90 (AVLMATGFIWSRYSLVII) form a helical membrane-spanning segment. Over 91-95 (PKNWS) the chain is Mitochondrial matrix. The chain crosses the membrane as a helical span at residues 96–115 (LFAVNFFVGAAGASQLFRIW). Residues 116–127 (RYNQELKAKAHK) lie on the Mitochondrial intermembrane side of the membrane.

It belongs to the mitochondrial pyruvate carrier (MPC) (TC 2.A.105) family. As to quaternary structure, homodimer. Homooligomer. Forms heterodimers with MPC1 and MPC1L. The heterodimer is the more stable and dominant form.

The protein localises to the mitochondrion inner membrane. The enzyme catalyses pyruvate(out) + H(+)(out) = pyruvate(in) + H(+)(in). Mediates the uptake of pyruvate into mitochondria. In Pongo abelii (Sumatran orangutan), this protein is Mitochondrial pyruvate carrier 2 (MPC2).